A 300-amino-acid polypeptide reads, in one-letter code: NAD kinase (300 aa).

The Proton acceptor role is filled by D75. NAD(+) is bound by residues 75-76 (DG), 149-150 (ND), R177, D179, 190-195 (TAYALS), A214, and Q248.

This sequence belongs to the NAD kinase family. A divalent metal cation is required as a cofactor.

The protein localises to the cytoplasm. The enzyme catalyses NAD(+) + ATP = ADP + NADP(+) + H(+). In terms of biological role, involved in the regulation of the intracellular balance of NAD and NADP, and is a key enzyme in the biosynthesis of NADP. Catalyzes specifically the phosphorylation on 2'-hydroxyl of the adenosine moiety of NAD to yield NADP. This is NAD kinase from Burkholderia multivorans (strain ATCC 17616 / 249).